Here is a 427-residue protein sequence, read N- to C-terminus: Glutamate-1-semialdehyde 2,1-aminomutase (427 aa).

At lysine 268 the chain carries N6-(pyridoxal phosphate)lysine.

This sequence belongs to the class-III pyridoxal-phosphate-dependent aminotransferase family. HemL subfamily. Pyridoxal 5'-phosphate serves as cofactor.

The protein resides in the cytoplasm. The enzyme catalyses (S)-4-amino-5-oxopentanoate = 5-aminolevulinate. It functions in the pathway porphyrin-containing compound metabolism; protoporphyrin-IX biosynthesis; 5-aminolevulinate from L-glutamyl-tRNA(Glu): step 2/2. The polypeptide is Glutamate-1-semialdehyde 2,1-aminomutase (Methanococcus maripaludis (strain C7 / ATCC BAA-1331)).